The chain runs to 291 residues: Mitochondrial citrate transporter B (291 aa).

Solcar repeat units follow at residues 10-97 (PQKW…IKNS), 105-193 (LSPA…LKES), and 201-283 (PTLF…MTYL). Helical transmembrane passes span 16–36 (LIAGGVAGGVEAASTYPFEYA), 74–94 (STLIIGTTAKAAVRFVSYDTI), 112–132 (VAGVVAGATESVLAVTPTERI), 172–192 (TTLKQSATSAVRMGTYNILKE), 203–220 (LFTTFCMGALAGVVTVYA), and 255–276 (FWKGSSMRLGRLLLSGGIVFSV).

This sequence belongs to the mitochondrial carrier (TC 2.A.29) family.

The protein localises to the mitochondrion inner membrane. It catalyses the reaction citrate(in) + H(+)(in) = citrate(out) + H(+)(out). In terms of biological role, mitochondrial transporter that mediates citrate export from mitochondria to cytoplasm. Both ctpA, ctpB, and ctpD play important roles in citric acid transport across the mitochondrial membrane and function in a redundant manner. This chain is Mitochondrial citrate transporter B, found in Aspergillus niger (strain ATCC 1015 / CBS 113.46 / FGSC A1144 / LSHB Ac4 / NCTC 3858a / NRRL 328 / USDA 3528.7).